Reading from the N-terminus, the 153-residue chain is Glycosylation-dependent cell adhesion molecule 1 (153 aa).

Positions 1-18 are cleaved as a signal peptide; that stretch reads MKFLCVLLLASLAATSLA. Thr34 carries O-linked (GalNAc...) threonine; partial glycosylation. Phosphoserine is present on residues Ser47, Ser52, Ser56, Ser58, and Ser64. Residue Ser78 is glycosylated (O-linked (HexNAc...) serine). An N-linked (GlcNAc...) asparagine glycan is attached at Asn95. A disordered region spans residues 95 to 115; the sequence is NATLGSEETTEHTPSDASTTE. Residue Thr104 is glycosylated (O-linked (GalNAc...) threonine).

The protein belongs to the PP3/GlyCAM-1 family. Highly and specifically expressed in the lactating mammary gland.

The protein resides in the membrane. The chain is Glycosylation-dependent cell adhesion molecule 1 (GLYCAM1) from Bos taurus (Bovine).